A 282-amino-acid chain; its full sequence is Bifunctional protein FolD (282 aa).

NADP(+) contacts are provided by residues Asn-165–Ser-167, Ser-190, and Ile-231.

It belongs to the tetrahydrofolate dehydrogenase/cyclohydrolase family. As to quaternary structure, homodimer.

The catalysed reaction is (6R)-5,10-methylene-5,6,7,8-tetrahydrofolate + NADP(+) = (6R)-5,10-methenyltetrahydrofolate + NADPH. The enzyme catalyses (6R)-5,10-methenyltetrahydrofolate + H2O = (6R)-10-formyltetrahydrofolate + H(+). It participates in one-carbon metabolism; tetrahydrofolate interconversion. Its function is as follows. Catalyzes the oxidation of 5,10-methylenetetrahydrofolate to 5,10-methenyltetrahydrofolate and then the hydrolysis of 5,10-methenyltetrahydrofolate to 10-formyltetrahydrofolate. The chain is Bifunctional protein FolD from Clostridium botulinum (strain Langeland / NCTC 10281 / Type F).